Reading from the N-terminus, the 101-residue chain is Urease subunit beta (101 aa).

The protein belongs to the urease beta subunit family. As to quaternary structure, heterotrimer of UreA (gamma), UreB (beta) and UreC (alpha) subunits. Three heterotrimers associate to form the active enzyme.

Its subcellular location is the cytoplasm. The enzyme catalyses urea + 2 H2O + H(+) = hydrogencarbonate + 2 NH4(+). It functions in the pathway nitrogen metabolism; urea degradation; CO(2) and NH(3) from urea (urease route): step 1/1. The polypeptide is Urease subunit beta (Dinoroseobacter shibae (strain DSM 16493 / NCIMB 14021 / DFL 12)).